We begin with the raw amino-acid sequence, 432 residues long: Homogentisate 1,2-dioxygenase (432 aa).

The active-site Proton acceptor is H286. Positions 329 and 335 each coordinate Fe cation. Y344 and H365 together coordinate homogentisate. A Fe cation-binding site is contributed by H365.

This sequence belongs to the homogentisate dioxygenase family. In terms of assembly, hexamer; dimer of trimers. The cofactor is Fe cation.

The enzyme catalyses homogentisate + O2 = 4-maleylacetoacetate + H(+). It participates in amino-acid degradation; L-phenylalanine degradation; acetoacetate and fumarate from L-phenylalanine: step 4/6. In terms of biological role, involved in the catabolism of homogentisate (2,5-dihydroxyphenylacetate or 2,5-OH-PhAc), a central intermediate in the degradation of phenylalanine and tyrosine. Catalyzes the oxidative ring cleavage of the aromatic ring of homogentisate to yield maleylacetoacetate. The chain is Homogentisate 1,2-dioxygenase from Bordetella bronchiseptica (strain ATCC BAA-588 / NCTC 13252 / RB50) (Alcaligenes bronchisepticus).